The sequence spans 325 residues: Peroxidase 1 (325 aa).

The first 21 residues, 1 to 21, serve as a signal peptide directing secretion; that stretch reads MAIKNILALVVLLSVVGVSVA. 4 cysteine pairs are disulfide-bonded: Cys35-Cys113, Cys68-Cys73, Cys119-Cys321, and Cys198-Cys230. His66 serves as the catalytic Proton acceptor. Residues Asp67, Val70, Gly72, Asp74, and Ser76 each coordinate Ca(2+). Pro161 lines the substrate pocket. Residue His191 coordinates heme b. Thr192 contacts Ca(2+). An N-linked (GlcNAc...) asparagine glycan is attached at Asn207. Positions 242, 245, and 250 each coordinate Ca(2+).

It belongs to the peroxidase family. Classical plant (class III) peroxidase subfamily. The cofactor is heme b. Requires Ca(2+) as cofactor. As to expression, slightly expressed in roots.

It localises to the secreted. It catalyses the reaction 2 a phenolic donor + H2O2 = 2 a phenolic radical donor + 2 H2O. Its function is as follows. Removal of H(2)O(2), oxidation of toxic reductants, biosynthesis and degradation of lignin, suberization, auxin catabolism, response to environmental stresses such as wounding, pathogen attack and oxidative stress. These functions might be dependent on each isozyme/isoform in each plant tissue. The sequence is that of Peroxidase 1 (PER1) from Arabidopsis thaliana (Mouse-ear cress).